Consider the following 518-residue polypeptide: Protein nucleotidyltransferase YdiU (518 aa).

G100, G102, R103, K123, D135, G136, R193, and R200 together coordinate ATP. The active-site Proton acceptor is the D270. Mg(2+) contacts are provided by N271 and D280. D280 provides a ligand contact to ATP.

Belongs to the SELO family. The cofactor is Mg(2+). Mn(2+) is required as a cofactor.

The catalysed reaction is L-seryl-[protein] + ATP = 3-O-(5'-adenylyl)-L-seryl-[protein] + diphosphate. It catalyses the reaction L-threonyl-[protein] + ATP = 3-O-(5'-adenylyl)-L-threonyl-[protein] + diphosphate. The enzyme catalyses L-tyrosyl-[protein] + ATP = O-(5'-adenylyl)-L-tyrosyl-[protein] + diphosphate. It carries out the reaction L-histidyl-[protein] + UTP = N(tele)-(5'-uridylyl)-L-histidyl-[protein] + diphosphate. The catalysed reaction is L-seryl-[protein] + UTP = O-(5'-uridylyl)-L-seryl-[protein] + diphosphate. It catalyses the reaction L-tyrosyl-[protein] + UTP = O-(5'-uridylyl)-L-tyrosyl-[protein] + diphosphate. Functionally, nucleotidyltransferase involved in the post-translational modification of proteins. It can catalyze the addition of adenosine monophosphate (AMP) or uridine monophosphate (UMP) to a protein, resulting in modifications known as AMPylation and UMPylation. In Xanthomonas oryzae pv. oryzae (strain MAFF 311018), this protein is Protein nucleotidyltransferase YdiU.